The primary structure comprises 72 residues: Peptide Ctri9194 (72 aa).

Residues 1-23 form the signal peptide; that stretch reads MKTQNVLLSFGIVFLMISFSSET. The residue at position 38 (I38) is an Isoleucine amide. Residues 42-72 constitute a propeptide that is removed on maturation; the sequence is SLKDVESLDFLFDPTFTAADLAVLENALEDY.

It belongs to the non-disulfide-bridged peptide (NDBP) superfamily. Short antimicrobial peptide (group 4) family. As to expression, expressed by the venom gland.

Its subcellular location is the secreted. Its function is as follows. Antimicrobial peptide. The protein is Peptide Ctri9194 of Chaerilus tricostatus (Scorpion).